The sequence spans 601 residues: Protein CT_858 (601 aa).

This sequence belongs to the chlamydial CPn_1016/CT_858/TC_0248 family.

The polypeptide is Protein CT_858 (Chlamydia trachomatis serovar D (strain ATCC VR-885 / DSM 19411 / UW-3/Cx)).